A 357-amino-acid polypeptide reads, in one-letter code: Peptide chain release factor 1 (357 aa).

N5-methylglutamine is present on Gln236.

This sequence belongs to the prokaryotic/mitochondrial release factor family. In terms of processing, methylated by PrmC. Methylation increases the termination efficiency of RF1.

It is found in the cytoplasm. Peptide chain release factor 1 directs the termination of translation in response to the peptide chain termination codons UAG and UAA. In Mycobacterium marinum (strain ATCC BAA-535 / M), this protein is Peptide chain release factor 1.